We begin with the raw amino-acid sequence, 145 residues long: MLSVQPDTKPKGCAGCNRKIKDRYLLKALDKYWHEDCLKCACCDCRLGEVGSTLYTKANLILCRRDYLRLFGVTGNCAACSKLIPAFEMVMRAKENVYHLDCFACQLCNQRFCVGDKFFLKNNMILCQTDYEEGLMKEGYAPQVR.

LIM zinc-binding domains follow at residues 11–73 and 75–137; these read KGCA…LFGV and GNCA…GLMK.

In Danio rerio (Zebrafish), this protein is LIM domain only protein 3.